The chain runs to 445 residues: Phosphoglucosamine mutase (445 aa).

Residue serine 103 is the Phosphoserine intermediate of the active site. The Mg(2+) site is built by serine 103, aspartate 240, aspartate 242, and aspartate 244. At serine 103 the chain carries Phosphoserine.

It belongs to the phosphohexose mutase family. Mg(2+) is required as a cofactor. Post-translationally, activated by phosphorylation.

It carries out the reaction alpha-D-glucosamine 1-phosphate = D-glucosamine 6-phosphate. Functionally, catalyzes the conversion of glucosamine-6-phosphate to glucosamine-1-phosphate. This chain is Phosphoglucosamine mutase, found in Cellvibrio japonicus (strain Ueda107) (Pseudomonas fluorescens subsp. cellulosa).